Consider the following 145-residue polypeptide: Copper transporter 6 (145 aa).

2 consecutive transmembrane segments (helical) span residues leucine 47–leucine 67 and tyrosine 99–glycine 119.

It belongs to the copper transporter (Ctr) (TC 1.A.56) family. SLC31A subfamily.

Its subcellular location is the membrane. Involved in the transport of copper. The sequence is that of Copper transporter 6 (COPT6) from Arabidopsis thaliana (Mouse-ear cress).